The primary structure comprises 257 residues: Ribosomal RNA small subunit methyltransferase J (257 aa).

S-adenosyl-L-methionine-binding positions include 107-108 (RD), 123-124 (ER), and D177.

It belongs to the methyltransferase superfamily. RsmJ family.

It localises to the cytoplasm. It carries out the reaction guanosine(1516) in 16S rRNA + S-adenosyl-L-methionine = N(2)-methylguanosine(1516) in 16S rRNA + S-adenosyl-L-homocysteine + H(+). Its function is as follows. Specifically methylates the guanosine in position 1516 of 16S rRNA. The polypeptide is Ribosomal RNA small subunit methyltransferase J (Haemophilus influenzae (strain 86-028NP)).